The chain runs to 167 residues: uncharacterized protein (167 aa).

This is an uncharacterized protein from Aquifex aeolicus (strain VF5).